The following is a 690-amino-acid chain: Polyribonucleotide nucleotidyltransferase (690 aa).

Residues Asp-482 and Asp-488 each contribute to the Mg(2+) site. Residues 549 to 608 form the KH domain; sequence PRIITIQINPDRIRDVIGPGGKVIRALTEETGATIDIQDNGTVTIASVDGEAGAAAKRRI. An S1 motif domain is found at 618 to 686; it reads DTIYDGKVAK…RQGKIKLSMK (69 aa).

It belongs to the polyribonucleotide nucleotidyltransferase family. In terms of assembly, component of the RNA degradosome, which is a multiprotein complex involved in RNA processing and mRNA degradation. The cofactor is Mg(2+).

The protein resides in the cytoplasm. The enzyme catalyses RNA(n+1) + phosphate = RNA(n) + a ribonucleoside 5'-diphosphate. In terms of biological role, involved in mRNA degradation. Catalyzes the phosphorolysis of single-stranded polyribonucleotides processively in the 3'- to 5'-direction. The protein is Polyribonucleotide nucleotidyltransferase of Acidithiobacillus ferrooxidans (strain ATCC 23270 / DSM 14882 / CIP 104768 / NCIMB 8455) (Ferrobacillus ferrooxidans (strain ATCC 23270)).